The chain runs to 717 residues: uncharacterized protein (717 aa).

The protein belongs to the asfivirus C717R family.

It localises to the virion. This is an uncharacterized protein from African swine fever virus (isolate Tick/Malawi/Lil 20-1/1983) (ASFV).